Consider the following 284-residue polypeptide: Bifunctional protein FolD (284 aa).

Residues 166–168 (GAS), Ser191, and Ile232 each bind NADP(+).

This sequence belongs to the tetrahydrofolate dehydrogenase/cyclohydrolase family. In terms of assembly, homodimer.

It catalyses the reaction (6R)-5,10-methylene-5,6,7,8-tetrahydrofolate + NADP(+) = (6R)-5,10-methenyltetrahydrofolate + NADPH. The enzyme catalyses (6R)-5,10-methenyltetrahydrofolate + H2O = (6R)-10-formyltetrahydrofolate + H(+). Its pathway is one-carbon metabolism; tetrahydrofolate interconversion. Its function is as follows. Catalyzes the oxidation of 5,10-methylenetetrahydrofolate to 5,10-methenyltetrahydrofolate and then the hydrolysis of 5,10-methenyltetrahydrofolate to 10-formyltetrahydrofolate. The sequence is that of Bifunctional protein FolD from Neisseria gonorrhoeae (strain ATCC 700825 / FA 1090).